The chain runs to 634 residues: 1-deoxy-D-xylulose-5-phosphate synthase (634 aa).

Thiamine diphosphate-binding positions include His-74 and 115 to 117 (AHS). Asp-146 serves as a coordination point for Mg(2+). Thiamine diphosphate is bound by residues 147–148 (GA), Asn-176, Tyr-283, and Glu-365. Asn-176 contributes to the Mg(2+) binding site.

The protein belongs to the transketolase family. DXPS subfamily. In terms of assembly, homodimer. Mg(2+) is required as a cofactor. It depends on thiamine diphosphate as a cofactor.

The enzyme catalyses D-glyceraldehyde 3-phosphate + pyruvate + H(+) = 1-deoxy-D-xylulose 5-phosphate + CO2. Its pathway is metabolic intermediate biosynthesis; 1-deoxy-D-xylulose 5-phosphate biosynthesis; 1-deoxy-D-xylulose 5-phosphate from D-glyceraldehyde 3-phosphate and pyruvate: step 1/1. In terms of biological role, catalyzes the acyloin condensation reaction between C atoms 2 and 3 of pyruvate and glyceraldehyde 3-phosphate to yield 1-deoxy-D-xylulose-5-phosphate (DXP). This is 1-deoxy-D-xylulose-5-phosphate synthase from Burkholderia mallei (strain ATCC 23344).